A 219-amino-acid chain; its full sequence is Phosphatidylserine decarboxylase proenzyme (219 aa).

The active-site Schiff-base intermediate with substrate; via pyruvic acid is Ser-188. A Pyruvic acid (Ser); by autocatalysis modification is found at Ser-188.

It belongs to the phosphatidylserine decarboxylase family. PSD-A subfamily. In terms of assembly, heterodimer of a large membrane-associated beta subunit and a small pyruvoyl-containing alpha subunit. It depends on pyruvate as a cofactor. Is synthesized initially as an inactive proenzyme. Formation of the active enzyme involves a self-maturation process in which the active site pyruvoyl group is generated from an internal serine residue via an autocatalytic post-translational modification. Two non-identical subunits are generated from the proenzyme in this reaction, and the pyruvate is formed at the N-terminus of the alpha chain, which is derived from the carboxyl end of the proenzyme. The post-translation cleavage follows an unusual pathway, termed non-hydrolytic serinolysis, in which the side chain hydroxyl group of the serine supplies its oxygen atom to form the C-terminus of the beta chain, while the remainder of the serine residue undergoes an oxidative deamination to produce ammonia and the pyruvoyl prosthetic group on the alpha chain.

The protein resides in the cell membrane. It carries out the reaction a 1,2-diacyl-sn-glycero-3-phospho-L-serine + H(+) = a 1,2-diacyl-sn-glycero-3-phosphoethanolamine + CO2. Its pathway is phospholipid metabolism; phosphatidylethanolamine biosynthesis; phosphatidylethanolamine from CDP-diacylglycerol: step 2/2. Its function is as follows. Catalyzes the formation of phosphatidylethanolamine (PtdEtn) from phosphatidylserine (PtdSer). In Trichlorobacter lovleyi (strain ATCC BAA-1151 / DSM 17278 / SZ) (Geobacter lovleyi), this protein is Phosphatidylserine decarboxylase proenzyme.